The sequence spans 468 residues: 3-isopropylmalate dehydratase large subunit (468 aa).

Residues Cys347, Cys407, and Cys410 each coordinate [4Fe-4S] cluster.

This sequence belongs to the aconitase/IPM isomerase family. LeuC type 1 subfamily. Heterodimer of LeuC and LeuD. [4Fe-4S] cluster is required as a cofactor.

The enzyme catalyses (2R,3S)-3-isopropylmalate = (2S)-2-isopropylmalate. Its pathway is amino-acid biosynthesis; L-leucine biosynthesis; L-leucine from 3-methyl-2-oxobutanoate: step 2/4. Catalyzes the isomerization between 2-isopropylmalate and 3-isopropylmalate, via the formation of 2-isopropylmaleate. This Prochlorococcus marinus (strain SARG / CCMP1375 / SS120) protein is 3-isopropylmalate dehydratase large subunit.